Here is a 597-residue protein sequence, read N- to C-terminus: Aspartate--tRNA(Asp/Asn) ligase (597 aa).

Glu-175 lines the L-aspartate pocket. The aspartate stretch occupies residues 199–202 (QQYK). L-aspartate contacts are provided by Arg-221 and His-456. 221–223 (RDE) serves as a coordination point for ATP. Glu-490 lines the ATP pocket. Arg-497 contributes to the L-aspartate binding site. 542 to 545 (GVDR) is a binding site for ATP.

The protein belongs to the class-II aminoacyl-tRNA synthetase family. Type 1 subfamily. Homodimer.

The protein localises to the cytoplasm. It catalyses the reaction tRNA(Asx) + L-aspartate + ATP = L-aspartyl-tRNA(Asx) + AMP + diphosphate. In terms of biological role, aspartyl-tRNA synthetase with relaxed tRNA specificity since it is able to aspartylate not only its cognate tRNA(Asp) but also tRNA(Asn). Reaction proceeds in two steps: L-aspartate is first activated by ATP to form Asp-AMP and then transferred to the acceptor end of tRNA(Asp/Asn). This Beijerinckia indica subsp. indica (strain ATCC 9039 / DSM 1715 / NCIMB 8712) protein is Aspartate--tRNA(Asp/Asn) ligase.